The primary structure comprises 119 residues: Flagellar transcriptional regulator FlhD (119 aa).

The protein belongs to the FlhD family. In terms of assembly, homodimer; disulfide-linked. Forms a heterohexamer composed of two FlhC and four FlhD subunits. Each FlhC binds a FlhD dimer, forming a heterotrimer, and a hexamer assembles by dimerization of two heterotrimers.

The protein resides in the cytoplasm. Functionally, functions in complex with FlhC as a master transcriptional regulator that regulates transcription of several flagellar and non-flagellar operons by binding to their promoter region. Activates expression of class 2 flagellar genes, including fliA, which is a flagellum-specific sigma factor that turns on the class 3 genes. Also regulates genes whose products function in a variety of physiological pathways. In Enterobacter sp. (strain 638), this protein is Flagellar transcriptional regulator FlhD.